A 306-amino-acid polypeptide reads, in one-letter code: uncharacterized protein (306 aa).

A disordered region spans residues 287-306 (DEEGKSEDAKRQEEEKKKSS).

It belongs to the aldo/keto reductase family.

The protein localises to the cytoplasm. It is found in the nucleus. This is an uncharacterized protein from Schizosaccharomyces pombe (strain 972 / ATCC 24843) (Fission yeast).